The chain runs to 360 residues: Peptide chain release factor 1 (360 aa).

Q235 is subject to N5-methylglutamine. The interval 284–313 (AKRQQAEASTRRNLLGSGDRSDRNRTYNFP) is disordered.

The protein belongs to the prokaryotic/mitochondrial release factor family. In terms of processing, methylated by PrmC. Methylation increases the termination efficiency of RF1.

Its subcellular location is the cytoplasm. Its function is as follows. Peptide chain release factor 1 directs the termination of translation in response to the peptide chain termination codons UAG and UAA. The protein is Peptide chain release factor 1 of Citrobacter koseri (strain ATCC BAA-895 / CDC 4225-83 / SGSC4696).